A 290-amino-acid polypeptide reads, in one-letter code: Nucleoid occlusion protein (290 aa).

The H-T-H motif DNA-binding region spans 153–172; the sequence is EALAQRLGKGQSTIANKLRL.

Belongs to the ParB family.

It localises to the cytoplasm. Its subcellular location is the nucleoid. In terms of biological role, effects nucleoid occlusion by binding relatively nonspecifically to DNA and preventing the assembly of the division machinery in the vicinity of the nucleoid, especially under conditions that disturb the cell cycle. It helps to coordinate cell division and chromosome segregation by preventing the formation of the Z ring through the nucleoid, which would cause chromosome breakage. This is Nucleoid occlusion protein from Bacillus anthracis (strain A0248).